The primary structure comprises 113 residues: U11-theraphotoxin-Hhn1a (113 aa).

The first 21 residues, 1 to 21, serve as a signal peptide directing secretion; the sequence is MNTVRVTFLLVFVLAVSLGQA. Positions 22 to 74 are excised as a propeptide; that stretch reads DKDENRMEMQKKTEQGKSYLDFAENLLLQKLEELEAKLLEEDSEESRNSRQKR. 3 cysteine pairs are disulfide-bonded: cysteine 75–cysteine 90, cysteine 82–cysteine 95, and cysteine 89–cysteine 110.

This sequence belongs to the neurotoxin 14 (magi-1) family. 01 (HNTX-16) subfamily. In terms of tissue distribution, expressed by the venom gland.

It localises to the secreted. Probable ion channel inhibitor. The chain is U11-theraphotoxin-Hhn1a from Cyriopagopus hainanus (Chinese bird spider).